A 324-amino-acid chain; its full sequence is MPQITLSAEVQPEQMGQRLDQTLAELFPEYSRSRLKTWIEADLVKLNDRITNIPREKVLGGERIEIIVEVEDETRFEAENIPLNIVYEDDDIIVINKPKDLVVHPGAGNPNGTVLNALLYHYPPIVEVPRAGIVHRLDKDTTGLMVVAKTIPAQTKLVRDLQKRKITREYEAVASGIMTKGGTVDQPMARHATKRTLMAVHPMGKPAVTHYRIMENYRNYTRLRLRLETGRTHQIRVHMAHIAHPLLGDQTYGGRPRPPKNASEDFMEVLRNFKRQALHAVMLRLAHPITGEMMEWYAPLPDDFVELLNALKADYLEHQDELDY.

An S4 RNA-binding domain is found at Gln-17 to Asp-90. Asp-138 is an active-site residue.

The protein belongs to the pseudouridine synthase RluA family.

The protein resides in the cytoplasm. It carries out the reaction uridine(1911/1915/1917) in 23S rRNA = pseudouridine(1911/1915/1917) in 23S rRNA. Its function is as follows. Responsible for synthesis of pseudouridine from uracil at positions 1911, 1915 and 1917 in 23S ribosomal RNA. This is Ribosomal large subunit pseudouridine synthase D (rluD) from Haemophilus influenzae (strain ATCC 51907 / DSM 11121 / KW20 / Rd).